The sequence spans 435 residues: Ornithine decarboxylase (435 aa).

At Lys-76 the chain carries N6-(pyridoxal phosphate)lysine. Residues Ser-207, Gly-244, and 283 to 286 (EPGR) contribute to the pyridoxal 5'-phosphate site. Substrate is bound at residue 339–340 (FD). Cys-368 serves as the catalytic Proton donor; shared with dimeric partner. Asp-369 lines the substrate pocket. Tyr-397 serves as a coordination point for pyridoxal 5'-phosphate.

Belongs to the Orn/Lys/Arg decarboxylase class-II family. In terms of assembly, homodimer. Only the dimer is catalytically active, as the active sites are constructed of residues from both monomers. Pyridoxal 5'-phosphate serves as cofactor.

It catalyses the reaction L-ornithine + H(+) = putrescine + CO2. Its pathway is amine and polyamine biosynthesis; putrescine biosynthesis via L-ornithine pathway; putrescine from L-ornithine: step 1/1. With respect to regulation, inhibited by antizyme (AZ) in response to polyamine levels. AZ inhibits the assembly of the functional homodimer by binding to ODC monomers and targeting them for ubiquitin-independent proteolytic destruction by the 26S proteasome. Catalyzes the first and rate-limiting step of polyamine biosynthesis that converts ornithine into putrescine, which is the precursor for the polyamines, spermidine and spermine. Polyamines are essential for cell proliferation and are implicated in cellular processes, ranging from DNA replication to apoptosis. The polypeptide is Ornithine decarboxylase (ODC) (Panagrellus redivivus (Microworm)).